Here is a 202-residue protein sequence, read N- to C-terminus: Putative 3-methyladenine DNA glycosylase (202 aa).

The protein belongs to the DNA glycosylase MPG family.

This Rhodopseudomonas palustris (strain BisB5) protein is Putative 3-methyladenine DNA glycosylase.